A 355-amino-acid polypeptide reads, in one-letter code: dTDP-glucose 4,6-dehydratase (355 aa).

NAD(+)-binding positions include 12–13 (FI), 33–36 (DKLT), 59–60 (DI), 81–85 (LAAES), and Thr100. Ser85 lines the substrate pocket. Residue Thr134 participates in substrate binding. Asp135 serves as the catalytic Proton donor. Catalysis depends on proton acceptor residues Glu136 and Tyr160. 160 to 164 (YSASK) contacts NAD(+). Asn189 contributes to the substrate binding site. Residue Asn190 participates in NAD(+) binding. Substrate-binding positions include 199 to 200 (KL), 215 to 217 (PVY), Arg224, Asn259, and 293 to 297 (DRPGH).

The protein belongs to the NAD(P)-dependent epimerase/dehydratase family. dTDP-glucose dehydratase subfamily. As to quaternary structure, homodimer. Requires NAD(+) as cofactor.

The catalysed reaction is dTDP-alpha-D-glucose = dTDP-4-dehydro-6-deoxy-alpha-D-glucose + H2O. It functions in the pathway carbohydrate biosynthesis; dTDP-L-rhamnose biosynthesis. Its pathway is bacterial outer membrane biogenesis; LPS O-antigen biosynthesis. In terms of biological role, catalyzes the dehydration of dTDP-D-glucose to form dTDP-6-deoxy-D-xylo-4-hexulose via a three-step process involving oxidation, dehydration and reduction. This is dTDP-glucose 4,6-dehydratase (rfbB1) from Neisseria meningitidis serogroup B (strain ATCC BAA-335 / MC58).